The following is a 352-amino-acid chain: 4-hydroxybenzaldehyde synthase, chloroplastic (352 aa).

An N-linked (GlcNAc...) asparagine glycan is attached at Asn122. Disulfide bonds link Cys159/Cys199 and Cys190/Cys231. Residue Asn247 is glycosylated (N-linked (GlcNAc...) asparagine). Cys289 and Cys339 form a disulfide bridge. Residues His298 and Asn318 contribute to the active site.

This sequence belongs to the peptidase C1 family. In terms of assembly, forms homodimers, homotrimers and homotetramers. Mainly expressed in pods, but also present in stems, roots, leaves and embryos (at protein level).

The protein resides in the plastid. It is found in the chloroplast. It catalyses the reaction (E)-4-coumarate + H2O = 4-hydroxybenzaldehyde + acetate. The protein operates within aromatic compound metabolism; phenylpropanoid biosynthesis. With respect to regulation, inhibited by ascorbate. Its function is as follows. Involved in the biosynthesis of vanillin (4-hydroxy-3-methoxy-benzaldehyde) and derivative natural products, key components of vanilla pods flavor. Catalyzes the conversion of (E)-4-coumarate to 4-hydroxybenzaldehyde, a vanillin precursor. Mediates the conversion of ferulic acid to 3-methoxy-4-hydroxybenzaldehyde with a very low efficiency. Cannot use cinnamic, caffeic, sinapic and o-coumaric acids as substrates. In Vanilla planifolia (Vanilla), this protein is 4-hydroxybenzaldehyde synthase, chloroplastic.